A 441-amino-acid chain; its full sequence is MPAAARVPLFVDDLVMVGVNYKTSGKELVEKAQFPDPLAAYSAISRIPAVREVVLLQTCNRVEVYAITTNKKATVESIKSLLEARAGEPIPEEKFVIYYGTDAVRHLFRVAAGLESMVLGEPDILRQVREAAEFAAKEGYIGKALKLTFENAVRVGKRVRTETALGKGSIGIPSASVKLLEELIGLEGKKLLVVGAGMAGRVVAVNAAKRGAKVIIVNRTLSKAKELAEEVGGEAYPLEELPRLLREADAVVVAVGGGSKVITRDAVAEVNKKLVIVDISEPPAVDPGVSLNPYVIYKDMLAVAEVANRGLEKRKSEIKRAEDIIEAELNKFVNFAQRVLADKILRELMEKVEQIRINELSKAMAKVPQEYAEVLDKMTSSLVKKVLKDVILKVREAAGKGDLTTLRIVAEVFDLKESLNNIEIIYDYNGVEQELKRKLEL.

Residues 58 to 61 (TCNR), Ser-116, 121 to 123 (EPD), and Gln-127 contribute to the substrate site. The Nucleophile role is filled by Cys-59. Residue 195–200 (GAGMAG) participates in NADP(+) binding.

The protein belongs to the glutamyl-tRNA reductase family. As to quaternary structure, homodimer.

It carries out the reaction (S)-4-amino-5-oxopentanoate + tRNA(Glu) + NADP(+) = L-glutamyl-tRNA(Glu) + NADPH + H(+). It functions in the pathway porphyrin-containing compound metabolism; protoporphyrin-IX biosynthesis; 5-aminolevulinate from L-glutamyl-tRNA(Glu): step 1/2. In terms of biological role, catalyzes the NADPH-dependent reduction of glutamyl-tRNA(Glu) to glutamate 1-semialdehyde (GSA). The chain is Glutamyl-tRNA reductase from Ignicoccus hospitalis (strain KIN4/I / DSM 18386 / JCM 14125).